A 113-amino-acid polypeptide reads, in one-letter code: U11-theraphotoxin-Hhn1a (113 aa).

The N-terminal stretch at 1–21 is a signal peptide; sequence MNTVRVAFLLVFVLAVSLGQA. A propeptide spanning residues 22–74 is cleaved from the precursor; that stretch reads DKDENRMEMQEKTEQGKSYLDFAENLLLQKLEEPEAKLLEEDSEESRNSRQKR. The segment covering 58–69 has biased composition (basic and acidic residues); that stretch reads KLLEEDSEESRN. A disordered region spans residues 58 to 83; sequence KLLEEDSEESRNSRQKRCIGEGVPCD. 3 cysteine pairs are disulfide-bonded: Cys75-Cys90, Cys82-Cys95, and Cys89-Cys110.

It belongs to the neurotoxin 14 (magi-1) family. 01 (HNTX-16) subfamily. As to expression, expressed by the venom gland.

The protein resides in the secreted. In terms of biological role, probable ion channel inhibitor. This is U11-theraphotoxin-Hhn1a from Cyriopagopus hainanus (Chinese bird spider).